The following is a 146-amino-acid chain: 3-dehydroquinate dehydratase (146 aa).

The active-site Proton acceptor is the Tyr-23. Substrate-binding residues include Asn-74, His-80, and Asp-87. His-100 serves as the catalytic Proton donor. Residues 101 to 102 (IS) and Arg-111 each bind substrate.

It belongs to the type-II 3-dehydroquinase family. Homododecamer.

It carries out the reaction 3-dehydroquinate = 3-dehydroshikimate + H2O. It participates in metabolic intermediate biosynthesis; chorismate biosynthesis; chorismate from D-erythrose 4-phosphate and phosphoenolpyruvate: step 3/7. Catalyzes a trans-dehydration via an enolate intermediate. In Bacillus cereus (strain AH820), this protein is 3-dehydroquinate dehydratase.